A 462-amino-acid polypeptide reads, in one-letter code: Receptor like protein 29 (462 aa).

An N-terminal signal peptide occupies residues 1-26 (MTMKRALPSPSSLLFFFLLITPLFLC). Over 27–441 (QENRVSASMP…SQASRYYRSC (415 aa)) the chain is Extracellular. A glycan (N-linked (GlcNAc...) asparagine) is linked at N139. 10 LRR repeats span residues 139–164 (NSSLQQLSLRSNPSLSGQIPPRISSL), 165–188 (KSLQILTLSQNRLTGDIPPAIFSL), 190–212 (SLVHLDLSYNKLTGKIPLQLGNL), 213–236 (NNLVGLDLSYNSLTGTIPPTISQL), 238–260 (MLQKLDLSSNSLFGRIPEGVEKL), 261–284 (RSLSFMALSNNKLKGAFPKGISNL), 286–308 (SLQYFIMDNNPMFVALPVELGFL), 309–331 (PKLQELQLENSGYSGVIPESYTK), 332–355 (LTNLSSLSLANNRLTGEIPSGFES), and 357–381 (PHVFHLNLSRNLLIGVVPFDSSFLR). N-linked (GlcNAc...) asparagine glycosylation is found at N334, N363, and N416. Residues 442-462 (FFANALFPFALFLGLHQRWVL) traverse the membrane as a helical segment.

The protein belongs to the RLP family.

It is found in the cell membrane. The chain is Receptor like protein 29 from Arabidopsis thaliana (Mouse-ear cress).